The following is a 188-amino-acid chain: ADP-ribosylation factor K (188 aa).

Residues 34 to 40 (DGAGKST), 75 to 79 (DVGGQ), and 134 to 137 (NKQD) each bind GTP.

Belongs to the small GTPase superfamily. Arf family.

Its subcellular location is the golgi apparatus. Its function is as follows. GTP-binding protein that may be involved in protein trafficking. May modulate vesicle budding and uncoating within the Golgi apparatus. The chain is ADP-ribosylation factor K (arrK) from Dictyostelium discoideum (Social amoeba).